A 3033-amino-acid chain; its full sequence is Genome polyprotein (3033 aa).

Position 2 is an N-acetylserine; by host (serine 2). Residues 2–23 form an interaction with STAT1 region; it reads STNPKPQRKTKRNTNRRPQDVK. Positions 2–58 are interaction with EIF2AK2/PKR; sequence STNPKPQRKTKRNTNRRPQDVKFPGGGQIVGGVYLLPRRGPRLGVRATRKTSERSQP. Residues 2-59 form an interaction with DDX3X region; that stretch reads STNPKPQRKTKRNTNRRPQDVKFPGGGQIVGGVYLLPRRGPRLGVRATRKTSERSQPR. Positions 2–75 are disordered; the sequence is STNPKPQRKT…PKDRRSTGKS (74 aa). 2 short sequence motifs (nuclear localization signal) span residues 5-13 and 38-43; these read PKPQRKTKR and PRRGPR. Positions 7–16 are enriched in basic residues; sequence PQRKTKRNTN. Over residues 32-47 the composition is skewed to low complexity; sequence GGVYLLPRRGPRLGVR. Serine 53 is subject to Phosphoserine; by host. 2 short sequence motifs (nuclear localization signal) span residues 58 to 64 and 66 to 71; these read PRGRRQP and PKDRRS. Serine 99 and serine 116 each carry phosphoserine; by host. Residues 112-152 are important for endoplasmic reticulum and mitochondrial localization; that stretch reads PRHRSRNLGRVIDTITCGFADLMGYIPVVGAPVGGVARALA. The interaction with APOA2 stretch occupies residues 122–173; that stretch reads VIDTITCGFADLMGYIPVVGAPVGGVARALAHGVRVLEDGINYATRNLPGCS. The segment at 164 to 167 is important for lipid droplets localization; the sequence is YATR. The propeptide at 178–191 is ER anchor for the core protein, removed in mature form by host signal peptidase; sequence LLALLSCVTVPVSS. Over 190–358 the chain is Lumenal; sequence SSVEIRNIST…FGGHWGVVFG (169 aa). Residues asparagine 196 and asparagine 209 are each glycosylated (N-linked (GlcNAc...) asparagine; by host). An important for fusion region spans residues 265–296; the sequence is IVMAATVCSALYVGDVCGAVMIVSQALIVSPE. N-linked (GlcNAc...) asparagine; by host glycosylation is present at asparagine 305. The helical transmembrane segment at 359-379 threads the bilayer; the sequence is LAYFSMQGAWAKVIAILLLVA. Topologically, residues 380–729 are lumenal; it reads GVDATTYSTG…WEWVVLLFLL (350 aa). Positions 385–412 are HVR1; it reads TYSTGATVGRTVGSFAGLFKLGAQQNVQ. Asparagine 417, asparagine 423, and asparagine 430 each carry an N-linked (GlcNAc...) (high mannose) asparagine; by host glycan. Cystine bridges form between cysteine 429–cysteine 554, cysteine 452–cysteine 459, cysteine 488–cysteine 496, and cysteine 505–cysteine 510. A glycan (N-linked (GlcNAc...) asparagine; by host) is linked at asparagine 448. Residues 475–480 are HVR2; it reads ETNVTN. Asparagine 477 carries N-linked (GlcNAc...) asparagine; by host glycosylation. The CD81-binding 1 stretch occupies residues 482 to 495; it reads EDMRPYCWHYPPKP. An N-linked (GlcNAc...) asparagine; by host glycan is attached at asparagine 534. Residues 546–553 are CD81-binding 2; the sequence is PPRGAWFG. Asparagine 558 carries N-linked (GlcNAc...) asparagine; by host glycosylation. 4 disulfide bridges follow: cysteine 566–cysteine 571, cysteine 585–cysteine 589, cysteine 601–cysteine 624, and cysteine 611–cysteine 648. N-linked (GlcNAc...) (high mannose) asparagine; by host glycans are attached at residues asparagine 627 and asparagine 649. Cysteines 656 and 681 form a disulfide. Positions 664 to 675 are PKR/eIF2-alpha phosphorylation homology domain (PePHD); sequence GQQSPLLHSTTE. Residues 730–750 form a helical membrane-spanning segment; the sequence is LADARICACLWMLIILGQAEA. The Lumenal segment spans residues 751–761; that stretch reads ALEKLIILHSA. Residues 762–782 traverse the membrane as a helical segment; sequence SAASANGPLWFFIFFTAAWYL. The Cytoplasmic segment spans residues 783 to 786; that stretch reads KGRV. The helical transmembrane segment at 787 to 807 threads the bilayer; that stretch reads VPAATYSVLGLWSFLLLVLAL. The Lumenal portion of the chain corresponds to 808-817; it reads PQQAYALDAA. Residues 818–838 traverse the membrane as a helical segment; the sequence is EQGELGLVILMIISIFTLTPA. The Cytoplasmic segment spans residues 839 to 885; sequence YKILLSRSVWWLSYMLVLAEAQVQQWVPPLEARGGRDGIIWVAVILH. Residues 886 to 906 traverse the membrane as a helical segment; the sequence is PHLVFEVTKWLLAILGSAYLL. The Lumenal portion of the chain corresponds to 907-932; the sequence is KASLLRVPYFVRAHALLRVCTLVRHL. The Peptidase C18 domain occupies 907 to 1030; the sequence is KASLLRVPYF…GYTSKGWKLL (124 aa). The protease NS2-3 stretch occupies residues 908 to 1210; the sequence is ASLLRVPYFV…PVESLDIARR (303 aa). Residue cysteine 926 is the site of S-palmitoyl cysteine; by host attachment. Residues 933-953 form a helical membrane-spanning segment; the sequence is AGARYIQMLLITMGRWTGTYI. The interval 933-953 is interaction with host SCPS1; the sequence is AGARYIQMLLITMGRWTGTYI. Residues 954 to 1661 lie on the Cytoplasmic side of the membrane; sequence YDHLSPLSTW…CMQADLEVMT (708 aa). Active-site for protease NS2 activity; shared with dimeric partner residues include histidine 956, glutamate 976, and cysteine 997. The region spanning 1031–1212 is the Peptidase S29 domain; the sequence is APITAYTQQT…ESLDIARRTP (182 aa). Catalysis depends on charge relay system; for serine protease NS3 activity residues histidine 1087 and aspartate 1111. 2 residues coordinate Zn(2+): cysteine 1127 and cysteine 1129. The active-site Charge relay system; for serine protease NS3 activity is the serine 1169. Zn(2+)-binding residues include cysteine 1175 and histidine 1179. Positions 1221-1373 constitute a Helicase ATP-binding domain; that stretch reads PAVPQTYQVG…ANIEEVALGH (153 aa). 1234 to 1241 lines the ATP pocket; it reads APTGSGKS. Positions 1241 and 1321 each coordinate Mg(2+). The DECH box signature appears at 1320–1323; that stretch reads DECH. Residues 1490-1502 are RNA-binding; that stretch reads QRRGRTGRGRLGT. The helical transmembrane segment at 1662-1682 threads the bilayer; it reads STWVLAGGVLAAVAAYCLATG. The segment at 1683–1694 is NS3-binding; it reads CISIIGRIHLND. Over 1683–1809 the chain is Cytoplasmic; it reads CISIIGRIHL…ALTSPLPTST (127 aa). Residues 1810-1830 form a helical membrane-spanning segment; the sequence is TILLNIMGGWLASQIAPPAGA. At 1831-1832 the chain is on the lumenal side; that stretch reads TG. Residues 1833 to 1853 form a helical membrane-spanning segment; sequence FVVSGLVGAAVGSIGLGKILV. A topological domain (cytoplasmic) is located at residue aspartate 1854. A helical transmembrane segment spans residues 1855–1875; that stretch reads VLAGYGAGISGALVAFKIMSG. The Lumenal segment spans residues 1876–1885; the sequence is EKPSVEDVVN. The helical transmembrane segment at 1886-1906 threads the bilayer; it reads LLPAILSPGALVVGVICAAIL. Topologically, residues 1907 to 1976 are cytoplasmic; sequence RRHVGQGEGA…WITEDCPVPC (70 aa). Cysteine 1976 carries S-palmitoyl cysteine; by host lipidation. The stretch at 1977–2007 is an intramembrane region; the sequence is SGSWLRDIWEWVCSILTDFKNWLSAKLLPKM. At 2008-3012 the chain is on the cytoplasmic side; the sequence is PGLPFISCQK…FHSVSHARPR (1005 aa). Residues cysteine 2015, cysteine 2033, cysteine 2035, and cysteine 2056 each contribute to the Zn(2+) site. An FKBP8-binding region spans residues 2124–2212; sequence EFFSWVDGVQ…ASSSASQLSA (89 aa). Positions 2124–2332 are transcriptional activation; the sequence is EFFSWVDGVQ…PVPPPRRRRA (209 aa). Positions 2139-2143 are interaction with non-structural protein 4A; sequence PTPGP. The disordered stretch occupies residues 2192–2213; sequence RRLARGSPPSQASSSASQLSAP. The interaction with host SKP2 stretch occupies residues 2193 to 2460; that stretch reads RLARGSPPSQ…ALITPCGPEE (268 aa). Serine 2198, serine 2201, serine 2205, serine 2208, serine 2211, and serine 2214 each carry phosphoserine; by host. Residues 2198-2213 are compositionally biased toward low complexity; sequence SPPSQASSSASQLSAP. The segment at 2214 to 2249 is ISDR; the sequence is SLKATCTTHKTAYDCDMVDANLFMGGDVTRIESDSK. Residues 2214–2275 are interaction with EIF2AK2/PKR; it reads SLKATCTTHK…REPSVPSEYL (62 aa). Residues 2249-2306 form an NS4B-binding region; the sequence is KVIVLDSLDSMTEVEDDREPSVPSEYLTRRRKFPPALPPWARPDYNPPVIETWKRPDY. The tract at residues 2299-2377 is V3; that stretch reads ETWKRPDYEP…DTGGDSVQQP (79 aa). The SH3-binding signature appears at 2322–2325; sequence APVP. A Nuclear localization signal motif is present at residues 2327–2335; the sequence is PRRRRARVL. Lysine 2350 is covalently cross-linked (Glycyl lysine isopeptide (Lys-Gly) (interchain with G-Cter in ubiquitin)). Residues 2354 to 2431 form a disordered region; it reads PLQDTNDSGH…IDSDSKSWST (78 aa). Residues 2355–2391 are compositionally biased toward polar residues; it reads LQDTNDSGHSTGADTGGDSVQQPSGETAASDAGSLSS. A phosphoserine; by host mark is found at serine 2471 and serine 2484. A RdRp catalytic domain is found at 2656–2774; that stretch reads PMGFSYDTRC…ISESQGNEED (119 aa). Positions 2662, 2760, and 2761 each coordinate Mg(2+). A helical transmembrane segment spans residues 3013–3033; sequence LLLLCLLLLSVGVGIFLLPAR.

The protein belongs to the hepacivirus polyprotein family. As to quaternary structure, homooligomer. Interacts with E1 (via C-terminus). Interacts with the non-structural protein 5A. Interacts (via N-terminus) with host STAT1 (via SH2 domain); this interaction results in decreased STAT1 phosphorylation and ubiquitin-mediated proteasome-dependent STAT1 degradation, leading to decreased IFN-stimulated gene transcription. Interacts with host STAT3; this interaction constitutively activates STAT3. Interacts with host LTBR receptor. Interacts with host TNFRSF1A receptor and possibly induces apoptosis. Interacts with host HNRPK. Interacts with host YWHAE. Interacts with host UBE3A/E6AP. Interacts with host DDX3X. Interacts with host APOA2. Interacts with host RXRA protein. Interacts with host SP110 isoform 3/Sp110b; this interaction sequesters the transcriptional corepressor SP110 away from the nucleus. Interacts with host CREB3 nuclear transcription protein; this interaction triggers cell transformation. Interacts with host ACY3. Interacts with host C1QR1. Interacts with host RBM24; this interaction, which enhances the interaction of the mature core protein with 5'-UTR, may inhibit viral translation and favor replication. Interacts with host EIF2AK2/PKR; this interaction induces the autophosphorylation of EIF2AK2. Part of the viral assembly initiation complex composed of NS2, E1, E2, NS3, NS4A, NS5A and the mature core protein. Forms a heterodimer with envelope glycoprotein E2. Interacts with mature core protein. Interacts with protease NS2. The heterodimer E1/E2 interacts with host CLDN1; this interaction plays a role in viral entry into host cell. Interacts with host SPSB2 (via C-terminus). Part of the viral assembly initiation complex composed of NS2, E1, E2, NS3, NS4A, NS5A and the mature core protein. Interacts with host NEURL3; this interaction prevents E1 binding to glycoprotein E2. In terms of assembly, forms a heterodimer with envelope glycoprotein E1. Interacts with host CD81 and SCARB1 receptors; these interactions play a role in viral entry into host cell. Interacts with host EIF2AK2/PKR; this interaction inhibits EIF2AK2 and probably allows the virus to evade the innate immune response. Interacts with host CD209/DC-SIGN and CLEC4M/DC-SIGNR. Interact with host SPCS1; this interaction is essential for viral particle assembly. Interacts with protease NS2. The heterodimer E1/E2 interacts with host CLDN1; this interaction plays a role in viral entry into host cell. Part of the viral assembly initiation complex composed of NS2, E1, E2, NS3, NS4A, NS5A and the mature core protein. Interacts with host SLC3A2/4F2hc; the interaction may facilitate viral entry into host cell. Interacts with human PLSCR1. As to quaternary structure, homohexamer. Homoheptamer. Interacts with protease NS2. Homodimer. Interacts with host SPCS1; this interaction is essential for viral particle assembly. Interacts with envelope glycoprotein E1. Interacts with envelope glycoprotein E2. Interacts with viroporin p7. Interacts with serine protease/helicase NS3. Part of the replication complex composed of NS2, NS3, NS4A, NS4B, NS5A and the RNA-directed RNA polymerase embedded in an ER-derived membranous web. Part of the viral assembly initiation complex composed of NS2, E1, E2, NS3, NS4A, NS5A and the mature core protein. In terms of assembly, interacts with protease NS2. Interacts with non-structural protein 4A; this interaction stabilizes the folding of NS3 serine protease. NS3-NS4A interaction is essential for NS3 activation and allows membrane anchorage of the latter. NS3/NS4A complex also prevents phosphorylation of host IRF3, thus preventing the establishment of dsRNA induced antiviral state. Interacts with host MAVS; this interaction leads to the cleavage and inhibition of host MAVS. Interacts with host TICAM1; this interaction leads to the cleavage and inhibition of host TICAM1. Interacts with host TANK-binding kinase/TBK1; this interaction results in the inhibition of the association between TBK1 and IRF3, which leads to the inhibition of IRF3 activation. Interacts with host RBM24. Part of the replication complex composed of NS2, NS3, NS4A, NS4B, NS5A and the RNA-directed RNA polymerase embedded in an ER-derived membranous web. Part of the viral assembly initiation complex composed of NS2, E1, E2, NS3, NS4A, NS5A and the mature core protein. As to quaternary structure, interacts with NS3 serine protease; this interaction stabilizes the folding of NS3 serine protease. NS3-NS4A interaction is essential for NS3 activation and allows membrane anchorage of the latter. Interacts with non-structural protein 5A (via N-terminus). Part of the replication complex composed of NS2, NS3, NS4A, NS4B, NS5A and the RNA-directed RNA polymerase embedded in an ER-derived membranous web. Part of the viral assembly initiation complex composed of NS2, E1, E2, NS3, NS4A, NS5A and the mature core protein. Homomultimer. Interacts with non-structural protein NS5A. Interacts with host PLA2G4C; this interaction likely initiates the recruitment of replication complexes to lipid droplets. Interacts with host STING; this interaction disrupts the interaction between STING and TBK1 thereby suppressing the interferon signaling. Part of the replication complex composed of NS2, NS3, NS4A, NS4B, NS5A and the RNA-directed RNA polymerase embedded in an ER-derived membranous web. In terms of assembly, monomer. Homodimer; dimerization is required for RNA-binding. Interacts with the mature core protein. Interacts (via N-terminus) with non-structural protein 4A. Interacts with non-structural protein 4B. Interacts (via region D2) with RNA-directed RNA polymerase. Part of the viral assembly initiation complex composed of NS2, E1, E2, NS3, NS4A, NS5A and the mature core protein. Part of the replication complex composed of NS2, NS3, NS4A, NS4B, NS5A and the RNA-directed RNA polymerase embedded in an ER-derived membranous web. Interacts with host GRB2. Interacts with host BIN1. Interacts with host PIK3R1. Interacts with host SRCAP. Interacts with host FKBP8. Interacts (via C-terminus) with host VAPB (via MSP domain). Interacts with host EIF2AK2/PKR; this interaction leads to disruption of EIF2AK2 dimerization by NS5A and probably allows the virus to evade the innate immune response. Interacts (via N-terminus) with host PACSIN2 (via N-terminus); this interaction attenuates protein kinase C alpha-mediated phosphorylation of PACSIN2 by disrupting the interaction between PACSIN2 and PRKCA. Interacts (via N-terminus) with host SRC kinase (via SH2 domain). Interacts with most Src-family kinases. Interacts with host IFI27 and SKP2; promotes the ubiquitin-mediated proteasomal degradation of NS5A. Interacts with host GPS2. Interacts with host TNFRSF21; this interaction allows the modulation by the virus of JNK, p38 MAPK, STAT3, and Akt signaling pathways in a DR6-dependent manner. Interacts (via N-terminus) with host CIDEB (via N-terminus); this interaction seems to regulate the association of HCV particles with APOE. Interacts with host CHKA/Choline Kinase-alpha; CHKA bridges host PI4KA and NS5A and potentiates NS5A-stimulated PI4KA activity, which then facilitates the targeting of the ternary complex to the ER for viral replication. Interacts with host SPSB2 (via C-terminus); this interaction targets NS5A for ubiquitination and degradation. Interacts with host RAB18; this interaction may promote the association of NS5A and other replicase components with lipid droplets. Interacts (via region D2) with host PPIA/CYPA; the interaction stimulates RNA-binding ability of NS5A and is dependent on the peptidyl-prolyl cis-trans isomerase activity of PPIA/CYPA. Interacts with host TRIM14; this interaction induces the degradation of NS5A. As to quaternary structure, homooligomer. Interacts with non-structural protein 5A. Interacts with host VAPB. Interacts with host PRK2/PKN2. Interacts with host HNRNPA1 and SEPT6; these interactions facilitate viral replication. Part of the replication complex composed of NS2, NS3, NS4A, NS4B, NS5A and the RNA-directed RNA polymerase. Requires Zn(2+) as cofactor. It depends on Mg(2+) as a cofactor. Post-translationally, specific enzymatic cleavages in vivo yield mature proteins. The structural proteins, core, E1, E2 and p7 are produced by proteolytic processing by host signal peptidases. The core protein precursor is synthesized as a 23 kDa, which is retained in the ER membrane through the hydrophobic signal peptide. Cleavage by the signal peptidase releases the 21 kDa mature core protein. The cleavage of the core protein precursor occurs between aminoacids 176 and 188 but the exact cleavage site is not known. Some degraded forms of the core protein appear as well during the course of infection. The other proteins (p7, NS2, NS3, NS4A, NS4B, NS5A and NS5B) are cleaved by the viral proteases. Autoprocessing between NS2 and NS3 is mediated by the NS2 cysteine protease catalytic domain and regulated by the NS3 N-terminal domain. Phosphorylated by host PKC and PKA. In terms of processing, ubiquitinated; mediated by UBE3A and leading to core protein subsequent proteasomal degradation. Post-translationally, highly N-glycosylated. Palmitoylation is required for NS2/3 autoprocessing and E2 recruitment to membranes. In terms of processing, palmitoylated. This modification may play a role in its polymerization or in protein-protein interactions. Post-translationally, phosphorylated on serines in a basal form termed p56. p58 is a hyperphosphorylated form of p56. p56 and p58 coexist in the cell in roughly equivalent amounts. Hyperphosphorylation is dependent on the presence of NS4A. Host CSNK1A1/CKI-alpha or RPS6KB1 kinases may be responsible for NS5A phosphorylation. Tyrosine phosphorylation is essential for the interaction with host SRC. In terms of processing, ubiquitinated. Ubiquitination, most probably at Lys-2350, mediated by host IFI27 and SKP2 leads to proteasomal degradation, restricting viral infection. Ubiquitination by host TRIM22 leads to interruption of viral replication. Post-translationally, the N-terminus is phosphorylated by host PRK2/PKN2.

The protein localises to the host endoplasmic reticulum membrane. The protein resides in the host mitochondrion membrane. It is found in the virion. Its subcellular location is the host cytoplasm. It localises to the host nucleus. The protein localises to the host lipid droplet. The protein resides in the virion membrane. It is found in the host mitochondrion. Its subcellular location is the host cell membrane. It localises to the host perinuclear region. The catalysed reaction is Hydrolysis of four peptide bonds in the viral precursor polyprotein, commonly with Asp or Glu in the P6 position, Cys or Thr in P1 and Ser or Ala in P1'.. It catalyses the reaction a ribonucleoside 5'-triphosphate + H2O = a ribonucleoside 5'-diphosphate + phosphate + H(+). The enzyme catalyses ATP + H2O = ADP + phosphate + H(+). It carries out the reaction RNA(n) + a ribonucleoside 5'-triphosphate = RNA(n+1) + diphosphate. Its activity is regulated as follows. Inhibited by the antiviral drug hexamethylene amiloride. Inhibition by amantadine appears to be genotype-dependent. Also inhibited by long-alkyl-chain iminosugar derivatives. With respect to regulation, activity is up-regulated by PRK2/PKN2-mediated phosphorylation. Its function is as follows. Packages viral RNA to form a viral nucleocapsid, and promotes virion budding. Participates in the viral particle production as a result of its interaction with the non-structural protein 5A. Binds RNA and may function as a RNA chaperone to induce the RNA structural rearrangements taking place during virus replication. Modulates viral translation initiation by interacting with viral IRES and 40S ribosomal subunit. Affects various cell signaling pathways, host immunity and lipid metabolism. Prevents the establishment of cellular antiviral state by blocking the interferon-alpha/beta (IFN-alpha/beta) and IFN-gamma signaling pathways and by blocking the formation of phosphorylated STAT1 and promoting ubiquitin-mediated proteasome-dependent degradation of STAT1. Activates STAT3 leading to cellular transformation. Regulates the activity of cellular genes, including c-myc and c-fos. May repress the promoter of p53, and sequester CREB3 and SP110 isoform 3/Sp110b in the cytoplasm. Represses cell cycle negative regulating factor CDKN1A, thereby interrupting an important check point of normal cell cycle regulation. Targets transcription factors involved in the regulation of inflammatory responses and in the immune response: suppresses TNF-induced NF-kappa-B activation, and activates AP-1. Binds to dendritic cells (DCs) via C1QR1, resulting in down-regulation of T-lymphocytes proliferation. Alters lipid metabolism by interacting with hepatocellular proteins involved in lipid accumulation and storage. Induces up-regulation of FAS promoter activity, and thereby contributes to the increased triglyceride accumulation in hepatocytes (steatosis). Forms a heterodimer with envelope glycoprotein E2, which mediates virus attachment to the host cell, virion internalization through clathrin-dependent endocytosis and fusion with host membrane. Fusion with the host cell is most likely mediated by both E1 and E2, through conformational rearrangements of the heterodimer required for fusion rather than a classical class II fusion mechanism. E1/E2 heterodimer binds host apolipoproteins such as APOB and ApoE thereby forming a lipo-viro-particle (LVP). APOE associated to the LVP allows the initial virus attachment to cell surface receptors such as the heparan sulfate proteoglycans (HSPGs), syndecan-1 (SDC1), syndecan-1 (SDC2), the low-density lipoprotein receptor (LDLR) and scavenger receptor class B type I (SCARB1). The cholesterol transfer activity of SCARB1 allows E2 exposure and binding of E2 to SCARB1 and the tetraspanin CD81. E1/E2 heterodimer binding on CD81 activates the epithelial growth factor receptor (EGFR) signaling pathway. Diffusion of the complex E1-E2-EGFR-SCARB1-CD81 to the cell lateral membrane allows further interaction with Claudin 1 (CLDN1) and occludin (OCLN) to finally trigger HCV entry. In terms of biological role, forms a heterodimer with envelope glycoprotein E1, which mediates virus attachment to the host cell, virion internalization through clathrin-dependent endocytosis and fusion with host membrane. Fusion with the host cell is most likely mediated by both E1 and E2, through conformational rearrangements of the heterodimer required for fusion rather than a classical class II fusion mechanism. The interaction between envelope glycoprotein E2 and host apolipoprotein E/APOE allows the proper assembly, maturation and infectivity of the viral particles. This interaction is probably promoted via the up-regulation of cellular autophagy by the virus. E1/E2 heterodimer binds host apolipoproteins such as APOB and APOE thereby forming a lipo-viro-particle (LVP). APOE associated to the LVP allows the initial virus attachment to cell surface receptors such as the heparan sulfate proteoglycans (HSPGs), syndecan-1 (SDC1), syndecan-1 (SDC2), the low-density lipoprotein receptor (LDLR) and scavenger receptor class B type I (SCARB1). The cholesterol transfer activity of SCARB1 allows E2 exposure and binding of E2 to SCARB1 and the tetraspanin CD81. E1/E2 heterodimer binding on CD81 activates the epithelial growth factor receptor (EGFR) signaling pathway. Diffusion of the complex E1-E2-EGFR-SCARB1-CD81 to the cell lateral membrane allows further interaction with Claudin 1 (CLDN1) and occludin (OCLN) to finally trigger HCV entry. Inhibits host EIF2AK2/PKR activation, preventing the establishment of an antiviral state. Viral ligand for CD209/DC-SIGN and CLEC4M/DC-SIGNR, which are respectively found on dendritic cells (DCs), and on liver sinusoidal endothelial cells and macrophage-like cells of lymph node sinuses. These interactions allow the capture of circulating HCV particles by these cells and subsequent facilitated transmission to permissive cells such as hepatocytes and lymphocyte subpopulations. The interaction between E2 and host amino acid transporter complex formed by SLC3A2 and SLC7A5/LAT1 may facilitate viral entry into host cell. Functionally, ion channel protein that acts as a viroporin and plays an essential role in the assembly, envelopment and secretion of viral particles. Regulates the host cell secretory pathway, which induces the intracellular retention of viral glycoproteins and favors assembly of viral particles. Creates a pore in acidic organelles and releases Ca(2+) and H(+) in the cytoplasm of infected cells, leading to a productive viral infection. High levels of cytoplasmic Ca(2+) may trigger membrane trafficking and transport of viral ER-associated proteins to viroplasms, sites of viral genome replication. This ionic imbalance induces the assembly of the inflammasome complex, which triggers the maturation of pro-IL-1beta into IL-1beta through the action of caspase-1. Targets also host mitochondria and induces mitochondrial depolarization. In addition of its role as a viroporin, acts as a lipid raft adhesion factor. Its function is as follows. Cysteine protease required for the proteolytic auto-cleavage between the non-structural proteins NS2 and NS3. The N-terminus of NS3 is required for the function of NS2 protease (active region NS2-3). Promotes the initiation of viral particle assembly by mediating the interaction between structural and non-structural proteins. Displays three enzymatic activities: serine protease with a chymotrypsin-like fold, NTPase and RNA helicase. NS3 serine protease, in association with NS4A, is responsible for the cleavages of NS3-NS4A, NS4A-NS4B, NS4B-NS5A and NS5A-NS5B. The NS3/NS4A complex prevents phosphorylation of host IRF3, thus preventing the establishment of dsRNA induced antiviral state. The NS3/NS4A complex induces host amino acid transporter component SLC3A2, thus contributing to HCV propagation. NS3 RNA helicase binds to RNA and unwinds both dsDNA and dsRNA in the 3' to 5' direction, and likely resolves RNA complicated stable secondary structures in the template strand. Binds a single ATP and catalyzes the unzipping of a single base pair of dsRNA. Inhibits host antiviral proteins TBK1 and IRF3 thereby preventing the establishment of an antiviral state. Cleaves host MAVS/CARDIF thereby preventing the establishment of an antiviral state. Cleaves host TICAM1/TRIF, thereby disrupting TLR3 signaling and preventing the establishment of an antiviral state. In terms of biological role, induces a specific membrane alteration that serves as a scaffold for the virus replication complex. This membrane alteration gives rise to the so-called ER-derived membranous web that contains the replication complex. NS4B self-interaction contributes to its function in membranous web formation. Promotes host TRIF protein degradation in a CASP8-dependent manner thereby inhibiting host TLR3-mediated interferon signaling. Disrupts the interaction between STING and TBK1 contributing to the inhibition of interferon signaling. Functionally, phosphorylated protein that is indispensable for viral replication and assembly. Both hypo- and hyperphosphorylated states are required for the viral life cycle. The hyperphosphorylated form of NS5A is an inhibitor of viral replication. Involved in RNA-binding and especially in binding to the viral genome. Zinc is essential for RNA-binding. Participates in the viral particle production as a result of its interaction with the mature viral core protein. Its interaction with host VAPB may target the viral replication complex to vesicles. Down-regulates viral IRES translation initiation. Mediates interferon resistance, presumably by interacting with and inhibiting host EIF2AK2/PKR. Prevents BIN1-induced apoptosis. Acts as a transcriptional activator of some host genes important for viral replication when localized in the nucleus. Via the interaction with host PACSIN2, modulates lipid droplet formation in order to promote virion assembly. Modulates TNFRSF21/DR6 signaling pathway for viral propagation. Its function is as follows. RNA-dependent RNA polymerase that performs primer-template recognition and RNA synthesis during viral replication. Initiates RNA transcription/replication at a flavin adenine dinucleotide (FAD), resulting in a 5'- FAD cap on viral RNAs. In this way, recognition of viral 5' RNA by host pattern recognition receptors can be bypassed, thereby evading activation of antiviral pathways. This Hepatitis C virus genotype 2b (isolate JPUT971017) (HCV) protein is Genome polyprotein.